Reading from the N-terminus, the 381-residue chain is (S)-scoulerine 9-O-methyltransferase (381 aa).

Residues Gly223, Glu246, Asp266, Met267, and Lys280 each coordinate S-adenosyl-L-methionine. The active-site Proton acceptor is His284.

This sequence belongs to the class I-like SAM-binding methyltransferase superfamily. Cation-independent O-methyltransferase family. COMT subfamily.

It catalyses the reaction (S)-scoulerine + S-adenosyl-L-methionine = (S)-tetrahydrocolumbamine + S-adenosyl-L-homocysteine + H(+). Functionally, produces a precursor of protoberberine alkaloids. The protein is (S)-scoulerine 9-O-methyltransferase (SMT) of Coptis japonica (Japanese goldthread).